The chain runs to 1442 residues: DNA polymerase III PolC-type (1442 aa).

Residues 426–582 enclose the Exonuclease domain; sequence YVVFDVETTG…YDTEATAYIF (157 aa).

Belongs to the DNA polymerase type-C family. PolC subfamily.

It is found in the cytoplasm. It carries out the reaction DNA(n) + a 2'-deoxyribonucleoside 5'-triphosphate = DNA(n+1) + diphosphate. Functionally, required for replicative DNA synthesis. This DNA polymerase also exhibits 3' to 5' exonuclease activity. In Staphylococcus epidermidis (strain ATCC 12228 / FDA PCI 1200), this protein is DNA polymerase III PolC-type.